The sequence spans 345 residues: Histidinol-phosphate aminotransferase (345 aa).

An N6-(pyridoxal phosphate)lysine modification is found at K205.

The protein belongs to the class-II pyridoxal-phosphate-dependent aminotransferase family. Histidinol-phosphate aminotransferase subfamily. In terms of assembly, homodimer. Pyridoxal 5'-phosphate serves as cofactor.

It carries out the reaction L-histidinol phosphate + 2-oxoglutarate = 3-(imidazol-4-yl)-2-oxopropyl phosphate + L-glutamate. It participates in amino-acid biosynthesis; L-histidine biosynthesis; L-histidine from 5-phospho-alpha-D-ribose 1-diphosphate: step 7/9. The protein is Histidinol-phosphate aminotransferase of Parabacteroides distasonis (strain ATCC 8503 / DSM 20701 / CIP 104284 / JCM 5825 / NCTC 11152).